The following is a 580-amino-acid chain: Lysine--tRNA ligase (580 aa).

The 'HIGH' region signature appears at 43-51; sequence PSGPIHLGN. The tract at residues 178-209 is disordered; it reads KAPAKKSQKPLDEAELEAAEGSGAAAEDDGSS. Positions 196-209 are enriched in low complexity; it reads AEGSGAAAEDDGSS. Positions 325–329 match the 'KMSKS' region motif; the sequence is KMSSS.

It belongs to the class-I aminoacyl-tRNA synthetase family.

It localises to the cytoplasm. The enzyme catalyses tRNA(Lys) + L-lysine + ATP = L-lysyl-tRNA(Lys) + AMP + diphosphate. This Streptomyces coelicolor (strain ATCC BAA-471 / A3(2) / M145) protein is Lysine--tRNA ligase (lysS).